The sequence spans 176 residues: Photosystem I assembly protein Ycf4 (176 aa).

Transmembrane regions (helical) follow at residues 22–42 (FLWA…GTAS) and 57–77 (VMTF…SMLF).

The protein belongs to the Ycf4 family.

Its subcellular location is the plastid thylakoid membrane. Functionally, seems to be required for the assembly of the photosystem I complex. The polypeptide is Photosystem I assembly protein Ycf4 (Cuscuta obtusiflora (Peruvian dodder)).